A 233-amino-acid polypeptide reads, in one-letter code: NAD-dependent protein deacylase (233 aa).

The region spanning 1–230 (MKNIMILSGA…ALDIENFMKD (230 aa)) is the Deacetylase sirtuin-type domain. 9-28 (GAGLSAPSGLKTFRDNDGLW) is a binding site for NAD(+). Tyrosine 53 and arginine 56 together coordinate substrate. 88–91 (QNVD) is a binding site for NAD(+). Catalysis depends on histidine 106, which acts as the Proton acceptor. Zn(2+) is bound by residues cysteine 114, cysteine 117, cysteine 133, and cysteine 136. NAD(+) contacts are provided by residues 172 to 174 (GTS) and 200 to 202 (NLE).

Belongs to the sirtuin family. Class III subfamily. Zn(2+) is required as a cofactor.

It localises to the cytoplasm. The enzyme catalyses N(6)-acetyl-L-lysyl-[protein] + NAD(+) + H2O = 2''-O-acetyl-ADP-D-ribose + nicotinamide + L-lysyl-[protein]. It carries out the reaction N(6)-succinyl-L-lysyl-[protein] + NAD(+) + H2O = 2''-O-succinyl-ADP-D-ribose + nicotinamide + L-lysyl-[protein]. Functionally, NAD-dependent lysine deacetylase and desuccinylase that specifically removes acetyl and succinyl groups on target proteins. Modulates the activities of several proteins which are inactive in their acylated form. This is NAD-dependent protein deacylase from Campylobacter jejuni subsp. jejuni serotype O:2 (strain ATCC 700819 / NCTC 11168).